A 227-amino-acid chain; its full sequence is Cytosolic-abundant heat soluble protein 106094 (227 aa).

Positions 1–28 (MEAMNMNIPRDAMFVPPPESEQNGYHEK) are disordered. Positions 90-140 (VEEARRDYAAKTRENEMLGQQYEKELERKSEAYRKHQEVEADKIRKELEKQ) form a coiled coil. 2 CAHS motif regions span residues 122–140 (YRKH…LEKQ) and 159–177 (QKRM…MDRE). A disordered region spans residues 198 to 227 (LDSSAAGTESGGHVVSQSEKFTERNREMKR). A compositionally biased stretch (basic and acidic residues) spans 217-227 (KFTERNREMKR).

This sequence belongs to the Cytosolic-abundant heat soluble protein (CAHS) family.

It is found in the cytoplasm. Functionally, CAHS proteins are cytosolic heat soluble proteins that seem to contribute to the anhydrobiosis in tardigrades, but their specific mechanisms are yet to be identified. It is possible that protection during anhydrobiosis might occur via the stabilization of vitrifying small molecules such as sugars, but not via the direct glass transition of CAHS proteins themselves. The chain is Cytosolic-abundant heat soluble protein 106094 from Paramacrobiotus richtersi (Water bear).